The sequence spans 81 residues: UPF0434 protein msl4429 (81 aa).

Belongs to the UPF0434 family.

The sequence is that of UPF0434 protein msl4429 from Mesorhizobium japonicum (strain LMG 29417 / CECT 9101 / MAFF 303099) (Mesorhizobium loti (strain MAFF 303099)).